The following is a 340-amino-acid chain: Melanin-concentrating hormone receptor 2 (340 aa).

Over 1 to 39 (MNPFHASCWNTSAELLNKSWNKEFAYQTASVVDTVILPS) the chain is Extracellular. Residues asparagine 10 and asparagine 17 are each glycosylated (N-linked (GlcNAc...) asparagine). Residues 40 to 60 (MIGIICSTGLVGNILIVFTII) form a helical membrane-spanning segment. Residues 61–69 (RSRKKTVPD) are Cytoplasmic-facing. Residues 70–90 (IYICNLAVADLVHIVGMPFLI) form a helical membrane-spanning segment. Over 91–104 (HQWARGGEWVFGGP) the chain is Extracellular. Residues 105 to 129 (LCTIITSLDTCNQFACSAIMTVMSV) form a helical membrane-spanning segment. The Cytoplasmic segment spans residues 130–154 (DRYFALVQPFRLTRWRTRYKTIRIN). Residues 155-175 (LGLWAASFILALPVWVYSKVI) traverse the membrane as a helical segment. At 176-200 (KFKDGVESCAFDLTSPDDVLWYTLY) the chain is on the extracellular side. A helical membrane pass occupies residues 201 to 221 (LTITTFFFPLPLILVCYILIL). Topologically, residues 222–252 (CYTWEMYQQNKDARCCNPSVPKQRVMKLTKM) are cytoplasmic. A helical membrane pass occupies residues 253 to 273 (VLVLVVVFILSAAPYHVIQLV). Over 274-288 (NLQMEQPTLAFYVGY) the chain is Extracellular. The helical transmembrane segment at 289 to 309 (YLSICLSYASSSINPFLYILL) threads the bilayer. Residues 310 to 340 (SGNFQKRLPQIQRRATEKEINNMGNTLKSHF) are Cytoplasmic-facing.

The protein belongs to the G-protein coupled receptor 1 family. As to expression, specifically expressed in the brain, with highest levels in cerebral cortex, hippocampus and amygdala. No expression detected in the cerebellum, thalamus or hypothalamus.

The protein localises to the cell membrane. In terms of biological role, receptor for melanin-concentrating hormone, coupled to G proteins that activate phosphoinositide hydrolysis. This chain is Melanin-concentrating hormone receptor 2 (MCHR2), found in Homo sapiens (Human).